The sequence spans 354 residues: Elongation factor Ts (354 aa).

The segment at T81–V84 is involved in Mg(2+) ion dislocation from EF-Tu.

Belongs to the EF-Ts family.

It localises to the cytoplasm. Functionally, associates with the EF-Tu.GDP complex and induces the exchange of GDP to GTP. It remains bound to the aminoacyl-tRNA.EF-Tu.GTP complex up to the GTP hydrolysis stage on the ribosome. The sequence is that of Elongation factor Ts from Campylobacter curvus (strain 525.92).